We begin with the raw amino-acid sequence, 220 residues long: Response regulator ArlR (220 aa).

The Response regulatory domain maps to 3 to 116 (KILIVEDEQN…ELLARIRAML (114 aa)). A 4-aspartylphosphate modification is found at Asp52. The ompR/PhoB-type DNA-binding region spans 122–220 (KNLIDIKGII…VRGVGYVVRQ (99 aa)).

Post-translationally, phosphorylated by ArlS.

It localises to the cytoplasm. Member of the two-component regulatory system ArlS/ArlR. The polypeptide is Response regulator ArlR (arlR) (Staphylococcus saprophyticus subsp. saprophyticus (strain ATCC 15305 / DSM 20229 / NCIMB 8711 / NCTC 7292 / S-41)).